The following is a 1209-amino-acid chain: Phospholipid-transporting ATPase ID (1209 aa).

Basic and acidic residues predominate over residues 1–12; the sequence is MTVPKEMPEKWA. Residues 1–36 are disordered; sequence MTVPKEMPEKWARAQAPPSWSRKKPSWGTEEERRAR. The Cytoplasmic segment spans residues 1–64; it reads MTVPKEMPEK…TSKYNILTFL (64 aa). The chain crosses the membrane as a helical span at residues 65–86; it reads PVNLFEQFQEVANTYFLFLLIL. Residues 87–92 lie on the Exoplasmic loop side of the membrane; that stretch reads QLIPQI. Residues 93 to 112 form a helical membrane-spanning segment; that stretch reads SSLSWFTTIVPLVLVLTITA. At 113–295 the chain is on the cytoplasmic side; sequence VKDATDDYFR…TSIDRLMNTL (183 aa). A helical membrane pass occupies residues 296–317; the sequence is VLWIFGFLVCMGVILAIGNAIW. The Exoplasmic loop segment spans residues 318–346; the sequence is EHEVGMRFQVYLPWDEAVDSAFFSGFLSF. Residues 347 to 368 form a helical membrane-spanning segment; it reads WSYIIILNTVVPISLYVSVEVI. At 369–889 the chain is on the cytoplasmic side; sequence RLGHSYFINW…GRWSYLRMCK (521 aa). Catalysis depends on Asp411, which acts as the 4-aspartylphosphate intermediate. ATP-binding residues include Asp411, Lys412, Thr413, Glu515, Phe556, Lys579, Arg613, Thr693, Gly694, Asp695, Arg807, and Lys813. Asp411 contacts Mg(2+). Thr413 is a Mg(2+) binding site. Asp833 serves as a coordination point for Mg(2+). The ATP site is built by Asn836 and Asp837. Asp837 lines the Mg(2+) pocket. The helical transmembrane segment at 890-910 threads the bilayer; the sequence is FLCYFFYKNFAFTMVHFWFGF. Residues 911–922 lie on the Exoplasmic loop side of the membrane; that stretch reads FCGFSAQTVYDQ. A helical transmembrane segment spans residues 923-942; it reads YFITLYNIVYTSLPVLAMGV. The Cytoplasmic segment spans residues 943-972; that stretch reads FDQDVPEQRSMEYPKLYEPGQLNLLFNKRE. A helical transmembrane segment spans residues 973 to 994; the sequence is FFICIAQGIYTSVLMFFIPYGV. Residues 995–1008 are Exoplasmic loop-facing; the sequence is FADATRDDGTQLAD. Residues 1009-1031 form a helical membrane-spanning segment; that stretch reads YQSFAVTVATSLVIVVSVQIGLD. Residues 1032 to 1037 are Cytoplasmic-facing; sequence TGYWTA. A helical transmembrane segment spans residues 1038–1058; the sequence is INHFFIWGSLAVYFAILFAMH. Residues 1059-1078 lie on the Exoplasmic loop side of the membrane; sequence SNGLFDMFPNQFRFVGNAQN. Residues 1079–1103 traverse the membrane as a helical segment; sequence TLAQPTVWLTIVLTTVVCIMPVVAF. Over 1104-1209 the chain is Cytoplasmic; it reads RFLRLNLKPD…SGGADKPLKG (106 aa). Ser1175 carries the phosphoserine modification. A disordered region spans residues 1181 to 1209; it reads SSSWIESLRRKKSDSASSPSGGADKPLKG. Residues 1195-1209 are compositionally biased toward low complexity; the sequence is SASSPSGGADKPLKG.

The protein belongs to the cation transport ATPase (P-type) (TC 3.A.3) family. Type IV subfamily. As to quaternary structure, component of a P4-ATPase flippase complex which consists of a catalytic alpha subunit ATP8B2 and an accessory beta subunit TMEM30A or TMEM30B. It depends on Mg(2+) as a cofactor. As to expression, isoform 3 is ubiquitous, with highest expression in aorta, cerebellum and uterus.

It is found in the cell membrane. Its subcellular location is the endoplasmic reticulum membrane. The catalysed reaction is ATP + H2O + phospholipidSide 1 = ADP + phosphate + phospholipidSide 2.. The enzyme catalyses a 1,2-diacyl-sn-glycero-3-phosphocholine(out) + ATP + H2O = a 1,2-diacyl-sn-glycero-3-phosphocholine(in) + ADP + phosphate + H(+). Its function is as follows. Catalytic component of P4-ATPase flippase complex, which catalyzes the hydrolysis of ATP coupled to the transport of phosphatidylcholine (PC) from the outer to the inner leaflet of the plasma membrane. May contribute to the maintenance of membrane lipid asymmetry. The sequence is that of Phospholipid-transporting ATPase ID from Homo sapiens (Human).